The primary structure comprises 412 residues: Multidrug resistance protein MdtG (412 aa).

10 helical membrane-spanning segments follow: residues 20–40, 62–82, 96–116, 119–139, 150–170, 177–197, 225–245, 260–280, 294–314, and 382–402; these read LFVA…IMPF, LVFS…GGLA, LGMS…QFLI, ALLG…ATQI, TLST…GLLA, PVFF…LYFI, VLCL…IAPI, LAFI…MSAP, ILVA…LVQT, and TVFF…YWCL.

It belongs to the major facilitator superfamily. DHA1 family. MdtG (TC 2.A.1.2.20) subfamily.

The protein resides in the cell inner membrane. This chain is Multidrug resistance protein MdtG, found in Rahnella sp. (strain Y9602).